We begin with the raw amino-acid sequence, 49 residues long: Cytochrome b559 subunit beta (49 aa).

Residues 24–40 (WLAVHVLGVPTVFFLGA) form a helical membrane-spanning segment. His28 serves as a coordination point for heme.

The protein belongs to the PsbE/PsbF family. Heterodimer of an alpha subunit and a beta subunit. PSII is composed of 1 copy each of membrane proteins PsbA, PsbB, PsbC, PsbD, PsbE, PsbF, PsbH, PsbI, PsbJ, PsbK, PsbL, PsbM, PsbT, PsbX, PsbY, Psb30/Ycf12, peripheral proteins PsbO, CyanoQ (PsbQ), PsbU, PsbV and a large number of cofactors. It forms dimeric complexes. Heme b serves as cofactor.

Its subcellular location is the cellular thylakoid membrane. In terms of biological role, this b-type cytochrome is tightly associated with the reaction center of photosystem II (PSII). PSII is a light-driven water:plastoquinone oxidoreductase that uses light energy to abstract electrons from H(2)O, generating O(2) and a proton gradient subsequently used for ATP formation. It consists of a core antenna complex that captures photons, and an electron transfer chain that converts photonic excitation into a charge separation. The protein is Cytochrome b559 subunit beta of Prochlorococcus marinus (strain MIT 9303).